Consider the following 259-residue polypeptide: Phosphatidylglycerol--prolipoprotein diacylglyceryl transferase (259 aa).

4 consecutive transmembrane segments (helical) span residues 12–32, 46–66, 83–103, and 109–129; these read LSLH…VYLA, IIDF…IYYV, IWNG…VLFV, and VLNP…AQAI. A 1,2-diacyl-sn-glycero-3-phospho-(1'-sn-glycerol) is bound at residue arginine 131. Transmembrane regions (helical) follow at residues 167–187, 194–214, and 226–246; these read VPTF…IMVW, LLDG…RLVI, and GIRV…VFIF.

The protein belongs to the Lgt family.

The protein localises to the cell membrane. It catalyses the reaction L-cysteinyl-[prolipoprotein] + a 1,2-diacyl-sn-glycero-3-phospho-(1'-sn-glycerol) = an S-1,2-diacyl-sn-glyceryl-L-cysteinyl-[prolipoprotein] + sn-glycerol 1-phosphate + H(+). It participates in protein modification; lipoprotein biosynthesis (diacylglyceryl transfer). In terms of biological role, catalyzes the transfer of the diacylglyceryl group from phosphatidylglycerol to the sulfhydryl group of the N-terminal cysteine of a prolipoprotein, the first step in the formation of mature lipoproteins. This is Phosphatidylglycerol--prolipoprotein diacylglyceryl transferase from Streptococcus equi subsp. zooepidemicus (strain H70).